Reading from the N-terminus, the 1048-residue chain is MASPASTNPAHDHFETFVQAQLCQDVLSSFQGLCRALGVESGGGLSQYHKIKAQLNYWSAKSLWAKLDKRASQPVYQQGQACTNTKCLVVGAGPCGLRAAVELALLGARVVLVEKRIKFSRHNVLHLWPFTIHDLRALGAKKFYGRFCTGTLDHISIRQLQLLLLKVALLLGVEIHWGVKFTGLQPPPRKGSGWRAQLQPNPPAQLASYEFDVLISAAGGKFVPEGFTIREMRGKLAIGITANFVNGRTVEETQVPEISGVARIYNQKFFQSLLKATGIDLENIVYYKDETHYFVMTAKKQCLLRLGVLRQDLSETDQLLGKANVVPEALQRFARAAADFATHGKLGKLEFAQDARGRPDVAAFDFTSMMRAESSARVQEKHGARLLLGLVGDCLVEPFWPLGTGVARGFLAAFDAAWMVKRWAEGAGPLEVLAERESLYQLLSQTSPENMHRNVAQYGLDPATRYPNLNLRAVTPNQVQDLYDMMDKEHAQRKSDEPDSRKTTTGSAGTEELLHWCQEQTAGFPGVHVTDFSSSWADGLALCALVHHLQPGLLEPSELQGMGALEATTWALRVAEHELGITPVLSAQAVMAGSDPLGLIAYLSHFHSAFKNTSHSSGLVSQPSGTPSAILFLGKLQRSLQRTRAKVDEETPSTEEPPVSEPSMSPNTPELSEHQEAGAEELCELCGKHLYILERFCVDGHFFHRSCFCCHTCEATLWPGGYGQHPGDGHFYCLQHLPQEDQKEADNNGSLESQELPTPGDSNMQPDPSSPPVTRVSPVPSPSQPARRLIRLSSLERLRLSSLNIIPDSGAEPPPKPPRSCSDLARESLKSSFVGWGVPVQAPQVPEAIEKGDDEEEEEEEEEEEEEPLPPLEPELEQTLLTLAKNPGAMTKYPTWRRTLMRRAKEEEMKRFCKAQAIQRRLNEIEATMRELEAEGTKLELALRKESSSPEQQKKLWLDQLLRLIQKKNSLVTEEAELMITVQELDLEEKQRQLDHELRGYMNREETMKTEADLQSENQVLRKLLEVVNQRDALIQFQEERRLREMPA.

The interval 1–489 (MASPASTNPA…QDLYDMMDKE (489 aa)) is monooxygenase domain. Residues cysteine 95, 114–116 (EKR), 121–123 (RHN), phenylalanine 181, tyrosine 293, and aspartate 393 each bind FAD. A Phosphothreonine modification is found at threonine 475. The span at 488–502 (KEHAQRKSDEPDSRK) shows a compositional bias: basic and acidic residues. The interval 488–508 (KEHAQRKSDEPDSRKTTTGSA) is disordered. The Calponin-homology (CH) domain occupies 507-611 (SAGTEELLHW…YLSHFHSAFK (105 aa)). Residue serine 616 is modified to Phosphoserine. The disordered stretch occupies residues 643–676 (TRAKVDEETPSTEEPPVSEPSMSPNTPELSEHQE). Residues 654–666 (TEEPPVSEPSMSP) are compositionally biased toward low complexity. An LIM zinc-binding domain is found at 681–743 (ELCELCGKHL…LQHLPQEDQK (63 aa)). Positions 683, 686, 704, 707, 710, 713, 733, and 736 each coordinate Zn(2+). 3 disordered regions span residues 741–787 (DQKE…QPAR), 805–825 (IIPD…SDLA), and 839–873 (PVQA…PPLE). Residues 747–765 (NNGSLESQELPTPGDSNMQ) are compositionally biased toward polar residues. Positions 772–787 (PVTRVSPVPSPSQPAR) are enriched in low complexity. Phosphoserine is present on residues serine 777 and serine 781. Coiled-coil stretches lie at residues 847–867 (EAIE…EEEE), 906–949 (EEEM…ESSS), and 974–1031 (EEAE…VNQR). The span at 852 to 868 (GDDEEEEEEEEEEEEEP) shows a compositional bias: acidic residues. One can recognise a bMERB domain in the interval 905 to 1048 (KEEEMKRFCK…EERRLREMPA (144 aa)).

It belongs to the Mical family. As to quaternary structure, associates with the SH3 domain of NEDD9. Interacts with VIM and PLXNA3. Interacts with RAB1B, RAB8A, RAB10, RAB13 and RAB15 (in their GTP-bound forms); binding to RAB1B is of low affinity compared to other Rab proteins; at least in case of RAB8A and RAB10 can bind 2 molecules of the Rab proteins simultaneously. Interacts with STK38 and STK38L. Interacts with GRAF1/ARHGAP26, GRAF2/ARHGAP10, RAB8A, RAB8B and RAB10; may bind simultaneously to GRAFs and Rabs and connects GRAFs to Rabs. Does not interact with RAB1 and RAB11A. The cofactor is FAD. In terms of tissue distribution, expressed in the postnatal and adult hippocampus; found in dentate gyrus, the polymorphic layer, cornu ammonis (CA) 1-3 and in mossy fibers of the striatum lucidum. In adult hippocampus strongly expressed in CA3 pyramidial neurons.

It is found in the cytoplasm. The protein resides in the cytoskeleton. The protein localises to the endosome membrane. It localises to the midbody. The catalysed reaction is L-methionyl-[F-actin] + NADPH + O2 + H(+) = L-methionyl-(R)-S-oxide-[F-actin] + NADP(+) + H2O. It catalyses the reaction NADPH + O2 + H(+) = H2O2 + NADP(+). Monooxygenase that promotes depolymerization of F-actin by mediating oxidation of specific methionine residues on actin to form methionine-sulfoxide, resulting in actin filament disassembly and preventing repolymerization. In the absence of actin, it also functions as a NADPH oxidase producing H(2)O(2). Acts as a cytoskeletal regulator that connects NEDD9 to intermediate filaments. Also acts as a negative regulator of apoptosis via its interaction with STK38 and STK38L; acts by antagonizing STK38 and STK38L activation by MST1/STK4. Involved in regulation of lamina-specific connectivity in the nervous system such as the development of lamina-restricted hippocampal connections. Through redox regulation of the actin cytoskeleton controls the intracellular distribution of secretory vesicles containing L1/neurofascin/NgCAM family proteins in neurons, thereby regulating their cell surface levels. May act as Rab effector protein and play a role in vesicle trafficking. Promotes endosomal tubule extension by associating with RAB8 (RAB8A or RAB8B), RAB10 and GRAF (GRAF1/ARHGAP26 or GRAF2/ARHGAP10) on the endosomal membrane which may connect GRAFs to Rabs, thereby participating in neosynthesized Rab8-Rab10-Rab11-dependent protein export. This Mus musculus (Mouse) protein is [F-actin]-monooxygenase MICAL1 (Mical1).